The following is a 589-amino-acid chain: Complement component C8 beta chain (589 aa).

The first 31 residues, 1–31 (MKIGAQVWRALAKSCLLCATLGCLHFPGSRG), serve as a signal peptide directing secretion. A propeptide spanning residues 32 to 53 (GKPDFFETKAVNGSLVKSRPVR) is cleaved from the precursor. A glycan (N-linked (GlcNAc...) asparagine) is linked at asparagine 43. Residues 63–116 (DCELSTWSSWTACDPCQKKRYRHTYLLRPSQFYGELCDLSDKEVEDCVTNQPCR) enclose the TSP type-1 1 domain. 7 disulfide bridges follow: cysteine 64–cysteine 99, cysteine 75–cysteine 109, cysteine 78–cysteine 115, cysteine 121–cysteine 132, cysteine 126–cysteine 145, cysteine 139–cysteine 154, and cysteine 161–cysteine 199. Tryptophan 69 and tryptophan 72 each carry a C-linked (Man) tryptophan glycan. Residues 120–155 (RCEGFVCAQTGRCVNRRLLCNGDNDCGDQSDEANCR) enclose the LDL-receptor class A domain. The Ca(2+) site is built by leucine 137, asparagine 140, aspartate 142, aspartate 144, aspartate 150, and glutamate 151. The 347-residue stretch at 157–503 (IYKNCQREME…EFQSEVSSCR (347 aa)) folds into the MACPF domain. 8 beta stranded membrane-spanning segments follow: residues 201–206 (PHYILD), 209–213 (FRKPY), 251–258 (FNFTSGFK), 261–268 (GVMDLGIK), 328–335 (SYGEYRDL), 338–343 (DFGTHF), 378–385 (AGGSFGIG), and 391–398 (VYVKVGVS). A disulfide bridge links cysteine 377 with cysteine 402. Positions 404–534 (DIMKEINERN…PGGFQGTACE (131 aa)) constitute an EGF-like domain. Threonine 417 carries the phosphothreonine modification. 4 disulfides stabilise this stretch: cysteine 502/cysteine 549, cysteine 504/cysteine 520, cysteine 507/cysteine 522, and cysteine 524/cysteine 533. The 44-residue stretch at 544 to 587 (DGKWSCWSDWSACSGGHKTRHRQCNNPAPHKGGSPCSGPASETL) folds into the TSP type-1 2 domain. C-linked (Man) tryptophan glycans are attached at residues tryptophan 550 and tryptophan 553. The cysteines at positions 556 and 589 are disulfide-linked. Residues 570 to 589 (PAPHKGGSPCSGPASETLNC) form a disordered region.

The protein belongs to the complement C6/C7/C8/C9 family. As to quaternary structure, heterotrimer of 3 chains: alpha (C8A), beta (C8B) and gamma (C8G); the alpha and gamma chains are disulfide bonded. Component of the membrane attack complex (MAC), composed of complement C5b, C6, C7, C8A, C8B, C8G and multiple copies of the pore-forming subunit C9. In terms of processing, N-glycosylated; contains one or two bound glycans. Not O-glycosylated.

It is found in the secreted. It localises to the target cell membrane. Its activity is regulated as follows. Membrane attack complex (MAC) assembly is inhibited by CD59, thereby protecting self-cells from damage during complement activation. CD59 acts by binding to the beta-haipins of C8 (C8A and C8B), forming an intermolecular beta-sheet that prevents incorporation of the multiple copies of C9 required for complete formation of the osmolytic pore. MAC assembly is also inhibited by clusterin (CLU) chaperones that inhibit polymerization of C9. Its function is as follows. Component of the membrane attack complex (MAC), a multiprotein complex activated by the complement cascade, which inserts into a target cell membrane and forms a pore, leading to target cell membrane rupture and cell lysis. The MAC is initiated by proteolytic cleavage of C5 into complement C5b in response to the classical, alternative, lectin and GZMK complement pathways. The complement pathways consist in a cascade of proteins that leads to phagocytosis and breakdown of pathogens and signaling that strengthens the adaptive immune system. C8B, together with C8A and C8G, inserts into the target membrane, but does not form pores by itself. During MAC assembly, associates with C5b, C6 and C7 to form the C5b8 intermediate complex that inserts into the target membrane and traverses the bilayer increasing membrane rigidity. This Mus musculus (Mouse) protein is Complement component C8 beta chain (C8b).